The chain runs to 974 residues: Zinc finger protein 280D (974 aa).

Residues lysine 44, lysine 46, lysine 86, lysine 99, lysine 138, lysine 201, lysine 222, lysine 245, lysine 287, and lysine 304 each participate in a glycyl lysine isopeptide (Lys-Gly) (interchain with G-Cter in SUMO2) cross-link. Positions 188 to 216 are disordered; sequence KRPSGSDISSVNPKKPKPSENTSGIDASS. C2H2-type zinc fingers lie at residues 333–355 and 370–393; these read FKCFSCLKVLKNNIRFMNHMKHH and TTCQHCYRQFPTPFQLQCHIESTH. The C2H2-type 3; degenerate zinc-finger motif lies at 400–424; it reads TICKICELSFETEQILLQHMKDNHK. 2 consecutive C2H2-type zinc fingers follow at residues 430 to 453 and 459 to 481; these read YICQVCNYRSSLFSEVESHFRTSH and LLCPFCLKVIKIATPYMHHYMKH. Disordered regions lie at residues 507–624, 751–797, and 815–974; these read TQHH…KVNT, IKTE…EGTG, and VTVS…EERS. Positions 539-557 are enriched in low complexity; that stretch reads SGSSVTPSISPSTSTLQLS. Position 557 is a phosphoserine (serine 557). The span at 571 to 587 shows a compositional bias: polar residues; sequence KLTTSTPNTTISDPSKA. Positions 591-611 are enriched in low complexity; the sequence is KSNGSKSKNKSKVSNMQKKQS. Residues 612–624 are compositionally biased toward polar residues; sequence TLSSSNKKSKVNT. Residue lysine 752 forms a Glycyl lysine isopeptide (Lys-Gly) (interchain with G-Cter in SUMO2) linkage. A compositionally biased stretch (basic and acidic residues) spans 763–775; the sequence is VSKETARHSRAEG. The segment covering 817–829 has biased composition (polar residues); sequence VSDTENVSSSKNI. Residues 830 to 860 are compositionally biased toward basic and acidic residues; the sequence is LSHDPDVGTDTMEKEEKTHHACQEMELKVDQ. The span at 861–884 shows a compositional bias: polar residues; sequence SSESTNPTEAELSSETRQGLQLTS. 2 positions are modified to phosphoserine: serine 904 and serine 907. Residues 938-950 are compositionally biased toward polar residues; sequence SANTSDTVSDQTG.

The protein localises to the nucleus. Its function is as follows. May function as a transcription factor. The chain is Zinc finger protein 280D (Znf280d) from Mus musculus (Mouse).